Here is a 704-residue protein sequence, read N- to C-terminus: Mannan-binding lectin serine protease 1 (704 aa).

A signal peptide spans 1 to 24 (MRFLSFRRLLLYHVLCLTLTEVSA). Residues 25-143 (HTVELNEMFG…TGFDAHYMAV (119 aa)) enclose the CUB 1 domain. Residues 25 to 189 (HTVELNEMFG…HTDNRTCRVE (165 aa)) form a homodimerization region. The interval 25-189 (HTVELNEMFG…HTDNRTCRVE (165 aa)) is interaction with MBL2. Positions 25–283 (HTVELNEMFG…STQSHSIQIL (259 aa)) are interaction with FCN2. The interval 25–305 (HTVELNEMFG…RLSYRAAGNE (281 aa)) is interaction with MBL1. The N-linked (GlcNAc...) asparagine glycan is linked to asparagine 54. Ca(2+) is bound by residues glutamate 73, aspartate 81, aspartate 126, serine 128, aspartate 144, valine 145, and glutamate 147. Cysteine 78 and cysteine 96 are joined by a disulfide. The EGF-like; calcium-binding domain occupies 144-187 (DVDECKEREDEELSCDHYCHNYIGGYYCSCRFGYILHTDNRTCR). Intrachain disulfides connect cysteine 148–cysteine 162, cysteine 158–cysteine 171, cysteine 173–cysteine 186, and cysteine 190–cysteine 217. Positions 164, 165, and 168 each coordinate Ca(2+). Asparagine 164 is subject to (3R)-3-hydroxyasparagine. Residue asparagine 183 is glycosylated (N-linked (GlcNAc...) asparagine). The CUB 2 domain occupies 190–302 (CSGNLFTQRT…RGWRLSYRAA (113 aa)). Ca(2+) is bound by residues glutamate 240, aspartate 250, aspartate 287, and serine 289. Residues cysteine 247 and cysteine 265 are joined by a disulfide bond. 2 consecutive Sushi domains span residues 304–369 (NECP…TCKI) and 370–439 (VDCG…TCLP). Cystine bridges form between cysteine 306/cysteine 354, cysteine 334/cysteine 367, cysteine 372/cysteine 419, cysteine 402/cysteine 437, cysteine 441/cysteine 577, and cysteine 480/cysteine 496. N-linked (GlcNAc...) asparagine glycosylation is found at asparagine 390 and asparagine 412. The Peptidase S1 domain maps to 454–701 (IFNGRPAQKG…NKDWIQRVTG (248 aa)). Residue histidine 495 is the Charge relay system of the active site. Leucine 538 carries an N-linked (GlcNAc...) asparagine glycan. Aspartate 557 (charge relay system) is an active-site residue. A glycan (N-linked (GlcNAc...) asparagine) is linked at glutamate 604. Intrachain disulfides connect cysteine 619–cysteine 636 and cysteine 647–cysteine 677. The active-site Charge relay system is the serine 651.

Belongs to the peptidase S1 family. In terms of assembly, homodimer. Interacts with the oligomeric lectins MBL2, FCN2 and FCN3; triggers the lectin pathway of complement through activation of C3. Interacts with SERPING1. Interacts with COLEC11; probably triggers the lectin pathway of complement. Post-translationally, the iron and 2-oxoglutarate dependent 3-hydroxylation of aspartate and asparagine is (R) stereospecific within EGF domains. N-glycosylated. Some N-linked glycan are of the complex-type. In terms of processing, autoproteolytic processing of the proenzyme produces the active enzyme composed on the heavy and the light chain held together by a disulfide bond. Isoform 1 but not isoform 2 is activated through autoproteolytic processing. In terms of tissue distribution, protein of the plasma which is primarily expressed by liver.

It is found in the secreted. Its activity is regulated as follows. Inhibited by SERPING1 and A2M. Functionally, functions in the lectin pathway of complement, which performs a key role in innate immunity by recognizing pathogens through patterns of sugar moieties and neutralizing them. The lectin pathway is triggered upon binding of mannan-binding lectin (MBL) and ficolins to sugar moieties which leads to activation of the associated proteases MASP1 and MASP2. Functions as an endopeptidase and may activate MASP2 or C2 or directly activate C3 the key component of complement reaction. Isoform 2 may have an inhibitory effect on the activation of the lectin pathway of complement or may cleave IGFBP5. Also plays a role in development. This is Mannan-binding lectin serine protease 1 (Masp1) from Rattus norvegicus (Rat).